The chain runs to 77 residues: ATP synthase subunit c (77 aa).

Transmembrane regions (helical) follow at residues 7-27 and 57-77; these read AFKY…AALG and VGLI…ILFL.

The protein belongs to the ATPase C chain family. In terms of assembly, F-type ATPases have 2 components, F(1) - the catalytic core - and F(0) - the membrane proton channel. F(1) has five subunits: alpha(3), beta(3), gamma(1), delta(1), epsilon(1). F(0) has three main subunits: a(1), b(2) and c(10-14). The alpha and beta chains form an alternating ring which encloses part of the gamma chain. F(1) is attached to F(0) by a central stalk formed by the gamma and epsilon chains, while a peripheral stalk is formed by the delta and b chains.

Its subcellular location is the cell membrane. Its function is as follows. F(1)F(0) ATP synthase produces ATP from ADP in the presence of a proton or sodium gradient. F-type ATPases consist of two structural domains, F(1) containing the extramembraneous catalytic core and F(0) containing the membrane proton channel, linked together by a central stalk and a peripheral stalk. During catalysis, ATP synthesis in the catalytic domain of F(1) is coupled via a rotary mechanism of the central stalk subunits to proton translocation. Functionally, key component of the F(0) channel; it plays a direct role in translocation across the membrane. A homomeric c-ring of between 10-14 subunits forms the central stalk rotor element with the F(1) delta and epsilon subunits. The chain is ATP synthase subunit c from Lactobacillus helveticus (strain DPC 4571).